Reading from the N-terminus, the 123-residue chain is Fluoride-specific ion channel FluC (123 aa).

Transmembrane regions (helical) follow at residues 4–24, 31–51, 64–83, and 100–120; these read VYIA…SGWV, ALPY…GLLM, IRMG…STFS, and ANIL…IFLA. Residues Gly-74 and Thr-77 each contribute to the Na(+) site.

The protein belongs to the fluoride channel Fluc/FEX (TC 1.A.43) family.

It localises to the cell inner membrane. The catalysed reaction is fluoride(in) = fluoride(out). Its activity is regulated as follows. Na(+) is not transported, but it plays an essential structural role and its presence is essential for fluoride channel function. Functionally, fluoride-specific ion channel. Important for reducing fluoride concentration in the cell, thus reducing its toxicity. This is Fluoride-specific ion channel FluC from Syntrophotalea carbinolica (strain DSM 2380 / NBRC 103641 / GraBd1) (Pelobacter carbinolicus).